The primary structure comprises 1634 residues: MYGYQGTGGQQPLGAQPTGFGFGNTPVQQQQQPMQPMQQSQPTGYQAPGGFQNYQPTGFAQQQQQQQPQQTGFQSMQPPMQQTGFQSQPNVSMYQGGGGQGYQSAPMLHQQTMQTGYQPQQQQPGFTGFQPQQQQQQQQTGFTGFQQQPQQQQPGFTGFQSQPTGYNANASAPAATPAAPLQQQKTGNARDPFAPTLPARPPLTSQPTGGGNKSVVDGVYIPNVRLSFLTADDQRNFENLFRQALPKGEQALSGDKARDILFRSGLPPITLSAIWNLADTTRSGALLFPEFAVAMYLCGQAVKGQTVPNNLSENIKNEVSSMVDIISFNIPDAGSRPSSSGQSVPQSQPQQQQQQSSASMLAGLNLGQPTGYQQQQATGYQPMQQQSTGYPMQAMQPQITGGMPLQQQRTGPMQPLQQQSTGYAPLQSQLTGGAPLQSQLTGGAPLQSQLTGGAPLQSQLTGGAPLQQQSTGYAPLQQQSTGYAPLQQQSTGYMPQQQTGMQPQSTGYGSMQPLTAMPTGKPGQWGFINTPSQGLPGIETMQQRLMPQATGAPVQQLPPMQLQQSATVNWAIAKEEKQIYDGIFMAWDKKRAGAIDGDTAIKIFTQSGLNRADLEAIWTLSDPSNKGRLDRDEFAVAMHLIYRHLNGYPIPSRLPPELVPPSSKNFSDSVNQVKSYLKAGGGRTGGSKLKSRSFTGDSTIKKDATVFKNDDSDFGYTSRNRRGGSSSTASSNGSSGNDISLSGKGSSISELKKLIREKQILLDAIDAEDSDMSRDSNLERRDQEAVADLKRRIQNVQRDIDVAPHSAISTDVGASADAKRNLMRKLDHLGDRLPQLASNVRRIEDKIANAKMELFRLKNPTSLVGTGPGGAITEADRIKARSKAKLQARMAALTGKGTTTGADASEEEDYEHRLLTHTSEVERSKAQNYEMIHDIEDSVKSLQRDLSSKLRETQEEVSEDRQRRRWEEAVGVEDDVRQFIYSLRSTRSSRPAPATASSSAPATGSPATAAPISATSTGASTPSAPAAGVDRKAQLKAEAERKMNERLAALGIKRKEKAQAHGFAPPDAKPAEASPAASPAVASPAVASPAATPAVSSPAPVSRGVPAPAAATPATDPATTPAVPVSAPADDSDSDDEEYEKLMAQKREQEERFKKQQEADKKKEEEKKQKKAAKEERMRKLREEMEANEAREKAWKESQSKEAEADEAEGDVGAAALAAFSNKATAPSTTPTAVAATPPVATSTPSPAAPTVPAADDNNPFHRLNNGGDAAAAAPAAGGEDNNPFLRPGTNQPIAAPSPASFSEAPKEAPKPVDPVKISNQRANQRAAKNDDDDWGMSSDEDDDQDYHRGNAAELASQLFRTMAPPIQRQPTGGAPITATPTGSAPAAPPAAPPVAPAAVEVAVAASEATPGPESAPPAPPMPEINIPPATEAPSAPAATEAPPAPPSAPTTIETTHLPPPVDTHNDMSSSEFDFETPEGSPTQQTFAEAAPPVAAPPPPPPTAAAAAPTGIPPPPPSAPGFGAPEAPSGIPPPPPPAPGFGAPPPPPGPAPSFDAPGGAPPPPPPGPPPPMFGAPAPPSMTGPSAGDLPERPPAATGGITALLGEITGGKTLRRVDDKDKKISSNPSAGAVLN.

Over residues 1–11 (MYGYQGTGGQQ) the composition is skewed to gly residues. Residues 1-215 (MYGYQGTGGQ…QPTGGGNKSV (215 aa)) are disordered. Low complexity-rich tracts occupy residues 28–42 (QQQQ…QSQP) and 55–74 (QPTG…TGFQ). Residues 75-93 (SMQPPMQQTGFQSQPNVSM) are compositionally biased toward polar residues. The segment covering 110 to 180 (QQTMQTGYQP…SAPAATPAAP (71 aa)) has biased composition (low complexity). Residues 233-322 (DQRNFENLFR…ENIKNEVSSM (90 aa)) form the EH 1 domain. In terms of domain architecture, EF-hand 1 spans 266-301 (LPPITLSAIWNLADTTRSGALLFPEFAVAMYLCGQA). Disordered stretches follow at residues 330-471 (IPDA…QQST) and 492-522 (GYMP…TGKP). Low complexity-rich tracts occupy residues 335–359 (SRPS…SSAS) and 368–386 (QPTG…MQQQ). Composition is skewed to polar residues over residues 387 to 471 (STGY…QQST) and 492 to 513 (GYMP…SMQP). Residues 576–665 (EKQIYDGIFM…PELVPPSSKN (90 aa)) form the EH 2 domain. The 36-residue stretch at 609-644 (LNRADLEAIWTLSDPSNKGRLDRDEFAVAMHLIYRH) folds into the EF-hand 2 domain. The tract at residues 711-744 (DSDFGYTSRNRRGGSSSTASSNGSSGNDISLSGK) is disordered. Residues 723–737 (GGSSSTASSNGSSGN) show a composition bias toward low complexity. Coiled-coil stretches lie at residues 748 to 803 (ISEL…IDVA) and 831 to 859 (DRLP…RLKN). Disordered stretches follow at residues 946-965 (LSSK…QRRR) and 985-1634 (STRS…AVLN). Positions 985–1028 (STRSSRPAPATASSSAPATGSPATAAPISATSTGASTPSAPAAG) are enriched in low complexity. Residues 1029 to 1045 (VDRKAQLKAEAERKMNE) show a composition bias toward basic and acidic residues. Residues 1071–1129 (AEASPAASPAVASPAVASPAATPAVSSPAPVSRGVPAPAAATPATDPATTPAVPVSAPA) show a composition bias toward low complexity. Acidic residues predominate over residues 1130 to 1139 (DDSDSDDEEY). A coiled-coil region spans residues 1131–1198 (DSDSDDEEYE…EAREKAWKES (68 aa)). The segment covering 1140–1203 (EKLMAQKREQ…AWKESQSKEA (64 aa)) has biased composition (basic and acidic residues). Composition is skewed to low complexity over residues 1211–1255 (DVGA…VPAA), 1265–1284 (NNGG…DNNP), and 1293–1304 (PIAAPSPASFSE). A compositionally biased stretch (acidic residues) spans 1331–1345 (DDDDWGMSSDEDDDQ). Over residues 1371–1386 (PTGGAPITATPTGSAP) the composition is skewed to low complexity. Over residues 1387-1396 (AAPPAAPPVA) the composition is skewed to pro residues. Positions 1397 to 1413 (PAAVEVAVAASEATPGP) are enriched in low complexity. Positions 1414-1423 (ESAPPAPPMP) are enriched in pro residues. Residues 1424 to 1442 (EINIPPATEAPSAPAATEA) are compositionally biased toward low complexity. Over residues 1494–1503 (VAAPPPPPPT) the composition is skewed to pro residues. Over residues 1520–1529 (PGFGAPEAPS) the composition is skewed to low complexity. Pro residues-rich tracts occupy residues 1530-1551 (GIPP…PGPA) and 1559-1581 (GAPP…PPSM). Residues 1599–1616 (GITALLGEITGGKTLRRV) enclose the WH2 domain. Residues 1614 to 1623 (RRVDDKDKKI) are compositionally biased toward basic and acidic residues.

The protein belongs to the PAN1 family. Component of the PAN1 actin cytoskeleton-regulatory complex.

It localises to the cell membrane. The protein resides in the endosome membrane. Its subcellular location is the cytoplasm. It is found in the cytoskeleton. The protein localises to the actin patch. Functionally, component of the PAN1 actin cytoskeleton-regulatory complex required for the internalization of endosomes during actin-coupled endocytosis. The complex links the site of endocytosis to the cell membrane-associated actin cytoskeleton. Mediates uptake of external molecules and vacuolar degradation of plasma membrane proteins. Plays a role in the proper organization of the cell membrane-associated actin cytoskeleton and promotes its destabilization. The protein is Actin cytoskeleton-regulatory complex protein PAN1 (PAN1) of Yarrowia lipolytica (strain CLIB 122 / E 150) (Yeast).